The chain runs to 552 residues: Antibiotic resistance protein MAB_2355c (552 aa).

ABC transporter domains are found at residues 4-270 (VQLD…RRWD) and 332-552 (AKRA…PQWV). ATP contacts are provided by residues 37–44 (GPNGTGKT) and 364–371 (GGNGTGKS).

This sequence belongs to the ABC transporter superfamily. ABCF family.

The enzyme catalyses ATP + H2O = ADP + phosphate + H(+). Its activity is regulated as follows. The ATPase activity can be inhibited by ribosome-targeting antibiotics. In terms of biological role, exhibits ATP hydrolysis activity and contributes to macrolide resistance by ribosome protection. Can also hydrolyze GTP, TTP and CTP but to a lesser extent than ATP. In vitro, rescues the transcription and translation activities affected by macrolides. Increased expression correlates with increased resistance to clarithromycin, one of the main drugs used to treat M.abscessus. This is Antibiotic resistance protein MAB_2355c from Mycobacteroides abscessus (strain ATCC 19977 / DSM 44196 / CCUG 20993 / CIP 104536 / JCM 13569 / NCTC 13031 / TMC 1543 / L948) (Mycobacterium abscessus).